A 189-amino-acid chain; its full sequence is NADH-quinone oxidoreductase subunit B (189 aa).

[4Fe-4S] cluster contacts are provided by Cys39, Cys40, Cys104, and Cys135.

Belongs to the complex I 20 kDa subunit family. As to quaternary structure, NDH-1 is composed of 14 different subunits. Subunits NuoB, C, D, E, F, and G constitute the peripheral sector of the complex. Requires [4Fe-4S] cluster as cofactor.

Its subcellular location is the cell inner membrane. It catalyses the reaction a quinone + NADH + 5 H(+)(in) = a quinol + NAD(+) + 4 H(+)(out). Its function is as follows. NDH-1 shuttles electrons from NADH, via FMN and iron-sulfur (Fe-S) centers, to quinones in the respiratory chain. The immediate electron acceptor for the enzyme in this species is believed to be a menaquinone. Couples the redox reaction to proton translocation (for every two electrons transferred, four hydrogen ions are translocated across the cytoplasmic membrane), and thus conserves the redox energy in a proton gradient. The sequence is that of NADH-quinone oxidoreductase subunit B from Chlorobium limicola (strain DSM 245 / NBRC 103803 / 6330).